The sequence spans 258 residues: F-box/SPRY domain-containing protein 1 (258 aa).

Residues 6-54 form the F-box domain; that stretch reads MEYAPNIPDNVLELIFSFLKLQDLRNCTLVCKSWYRFFCDENNEVWRAQ. One can recognise a B30.2/SPRY domain in the interval 64-256; the sequence is FKNDLLTVVP…ISMVYLGAPL (193 aa).

It belongs to the FBXO45/Fsn family. In terms of assembly, component of an E3 ubiquitin ligase complex composed of hiw and Fsn.

The protein localises to the synapse. It participates in protein modification; protein ubiquitination. Functionally, required in the presynaptic motoneuron to down-regulate the levels of wnd and restrain synaptic terminal growth at the neuromuscular junction (NMJ). The protein is F-box/SPRY domain-containing protein 1 of Anopheles gambiae (African malaria mosquito).